Consider the following 454-residue polypeptide: MVKKAKWLKNVKKAFSPDSKKLKHESVECQDSVISYPVLIATSRSSSPQFEVRVDEVNYEQKKNLYPPSSDSVTATVAHVLVDSPPSSPESVHQAIVVNRFAGKSKEEAAAILIQSTFRGHLARRESQVMRGQERLKLLMEGSVVQRQAAITLKCMQTLSRVQSQIRSRRIRMSEENQARHKQLLQKHAKELGGLKNGGNWNYSNQSKEQVEAGMLHKYEATMRRERALAYAFTHQQNLKSFSKTANPMFMDPSNPTWGWSWLERWMAGRPWESSEKEQNTTNNDNSSVKNSTNRNSQGGETAKSSNRNKLNSSTKPNTPSASSTATRNPRKKRPIPSSIKSKSSDDEAKSSERNRRPSIARPSVSDDETLSSSTARRSSNLIPTTKSARGKPKSQTSSRVAVTTSTTEESSILPEKAPAKKRLSTSASPAPKPRRSSAPPKVEKGVLKAERTP.

The calmodulin-binding stretch occupies residues 103–113; the sequence is GKSKEEAAAIL. The IQ domain occupies 107 to 136; the sequence is EEAAAILIQSTFRGHLARRESQVMRGQERL. The disordered stretch occupies residues 272-454; the sequence is WESSEKEQNT…KGVLKAERTP (183 aa). The segment covering 280–328 has biased composition (polar residues); sequence NTTNNDNSSVKNSTNRNSQGGETAKSSNRNKLNSSTKPNTPSASSTATR. The segment covering 343–356 has biased composition (basic and acidic residues); sequence KSSDDEAKSSERNR. The span at 371–388 shows a compositional bias: polar residues; that stretch reads LSSSTARRSSNLIPTTKS. The span at 397–412 shows a compositional bias: low complexity; sequence TSSRVAVTTSTTEESS. A Nuclear localization signal motif is present at residues 421–428; it reads KKRLSTSA. Residues 442–454 show a composition bias toward basic and acidic residues; sequence KVEKGVLKAERTP.

It belongs to the IQD family. As to quaternary structure, binds to multiple calmodulin (CaM) in the presence of Ca(2+)(e.g. CaM1 and CaM2) and CaM-like (e.g. CML8 and CML9) proteins. Interacts with KLCR1. Expressed in roots, flowers, stems, siliques, inflorescence stems and whole shoots. Restricted to the vascular bundles.

Its subcellular location is the nucleus. The protein localises to the nucleolus. It is found in the cytoplasm. The protein resides in the cytoskeleton. May be involved in cooperative interactions with calmodulins or calmodulin-like proteins. Modulates expression of glucosinolate pathway genes. May associate with nucleic acids and regulate gene expression at the transcriptional or post-transcriptional level. Recruits KLCR1 and calmodulin proteins to microtubules, thus being a potential scaffold in cellular signaling and trafficking. The polypeptide is Protein IQ-DOMAIN 1 (Arabidopsis thaliana (Mouse-ear cress)).